The following is a 101-amino-acid chain: Ribonuclease kappa-A (101 aa).

A run of 2 helical transmembrane segments spans residues 13 to 33 (ACGI…GVFF) and 68 to 88 (VSYN…FSFC).

This sequence belongs to the RNase K family.

It localises to the membrane. Endoribonuclease which preferentially cleaves ApU and ApG phosphodiester bonds. The polypeptide is Ribonuclease kappa-A (rnasek-a) (Xenopus laevis (African clawed frog)).